The sequence spans 214 residues: Nucleoside triphosphate pyrophosphatase (214 aa).

Asp-79 acts as the Proton acceptor in catalysis.

The protein belongs to the Maf family. Requires a divalent metal cation as cofactor.

It is found in the cytoplasm. The catalysed reaction is a ribonucleoside 5'-triphosphate + H2O = a ribonucleoside 5'-phosphate + diphosphate + H(+). The enzyme catalyses a 2'-deoxyribonucleoside 5'-triphosphate + H2O = a 2'-deoxyribonucleoside 5'-phosphate + diphosphate + H(+). Nucleoside triphosphate pyrophosphatase. May have a dual role in cell division arrest and in preventing the incorporation of modified nucleotides into cellular nucleic acids. The protein is Nucleoside triphosphate pyrophosphatase of Rhodococcus opacus (strain B4).